A 371-amino-acid polypeptide reads, in one-letter code: 3-isopropylmalate dehydrogenase (371 aa).

77 to 90 provides a ligand contact to NAD(+); sequence GPKWDDNPPHLRPE. Residues Arg-97, Arg-107, Arg-135, and Asp-224 each coordinate substrate. Mg(2+) is bound by residues Asp-224, Asp-248, and Asp-252. 282–294 is a binding site for NAD(+); the sequence is GSAPDIAGMNKAN.

This sequence belongs to the isocitrate and isopropylmalate dehydrogenases family. LeuB type 1 subfamily. In terms of assembly, homodimer. It depends on Mg(2+) as a cofactor. The cofactor is Mn(2+).

Its subcellular location is the cytoplasm. The enzyme catalyses (2R,3S)-3-isopropylmalate + NAD(+) = 4-methyl-2-oxopentanoate + CO2 + NADH. The protein operates within amino-acid biosynthesis; L-leucine biosynthesis; L-leucine from 3-methyl-2-oxobutanoate: step 3/4. In terms of biological role, catalyzes the oxidation of 3-carboxy-2-hydroxy-4-methylpentanoate (3-isopropylmalate) to 3-carboxy-4-methyl-2-oxopentanoate. The product decarboxylates to 4-methyl-2 oxopentanoate. This chain is 3-isopropylmalate dehydrogenase, found in Geobacillus kaustophilus (strain HTA426).